Here is a 149-residue protein sequence, read N- to C-terminus: Protein E6 (149 aa).

Zinc fingers lie at residues 30-66 (CVYC…CTKC) and 103-139 (CITC…CIAC). A PDZ-binding domain motif is present at residues 147–149 (TQV).

It belongs to the papillomaviridae E6 protein family. Forms homodimers. Interacts with ubiquitin-protein ligase UBE3A/E6-AP and thus forms a complex with human TP53. Interacts with human NFX1 and MAGI3. Interacts with human IRF3; this interaction inhibits the establishment of antiviral state. Interacts with human TYK2; this interaction inhibits JAK-STAT activation by interferon alpha. Interacts with host DLG1; this interaction leads to the proteasomal degradation of DLG1.

It localises to the host cytoplasm. Its subcellular location is the host nucleus. Plays a major role in the induction and maintenance of cellular transformation. Acts mainly as an oncoprotein by stimulating the destruction of many host cell key regulatory proteins. E6 associates with host UBE3A/E6-AP ubiquitin-protein ligase, and inactivates tumor suppressors TP53 and TP73 by targeting them to the 26S proteasome for degradation. In turn, DNA damage and chromosomal instabilities increase and lead to cell proliferation and cancer development. The complex E6/E6AP targets several other substrates to degradation via the proteasome including host DLG1 or NFX1, a repressor of human telomerase reverse transcriptase (hTERT). The resulting increased expression of hTERT prevents the shortening of telomere length leading to cell immortalization. Other cellular targets including BAK1, Fas-associated death domain-containing protein (FADD) and procaspase 8, are degraded by E6/E6AP causing inhibition of apoptosis. E6 also inhibits immune response by interacting with host IRF3 and TYK2. These interactions prevent IRF3 transcriptional activities and inhibit TYK2-mediated JAK-STAT activation by interferon alpha resulting in inhibition of the interferon signaling pathway. In Human papillomavirus 31, this protein is Protein E6.